Consider the following 230-residue polypeptide: uncharacterized protein (230 aa).

10–34 serves as a coordination point for NADP(+); that stretch reads VVTGASSGIGEAIAKKLSQQGASIV. Serine 139 contributes to the substrate binding site. Tyrosine 152 (proton acceptor) is an active-site residue.

It belongs to the short-chain dehydrogenases/reductases (SDR) family.

This is an uncharacterized protein from Staphylococcus epidermidis (strain ATCC 12228 / FDA PCI 1200).